The chain runs to 386 residues: O-phospho-L-seryl-tRNA:Cys-tRNA synthase (386 aa).

Pyridoxal 5'-phosphate-binding positions include 89-90, Asn196, and 219-221; these read AR and SGH. Lys222 bears the N6-(pyridoxal phosphate)lysine mark.

It belongs to the SepCysS family. In terms of assembly, homodimer. Interacts with SepRS. It depends on pyridoxal 5'-phosphate as a cofactor.

It catalyses the reaction O-phospho-L-seryl-tRNA(Cys) + hydrogen sulfide + H(+) = L-cysteinyl-tRNA(Cys) + phosphate. Functionally, converts O-phospho-L-seryl-tRNA(Cys) (Sep-tRNA(Cys)) to L-cysteinyl-tRNA(Cys) (Cys-tRNA(Cys)). This is O-phospho-L-seryl-tRNA:Cys-tRNA synthase from Methanosarcina mazei (strain ATCC BAA-159 / DSM 3647 / Goe1 / Go1 / JCM 11833 / OCM 88) (Methanosarcina frisia).